Consider the following 321-residue polypeptide: Glucan 1,3-beta-glucosidase (321 aa).

The N-terminal stretch at 1 to 21 (MQFLSSFVFAALALLPLSAMA) is a signal peptide. 2 N-linked (GlcNAc...) asparagine glycosylation sites follow: N39 and N99. The Proton donor role is filled by E141. 3 N-linked (GlcNAc...) asparagine glycosylation sites follow: N210, N213, and N237. E244 (nucleophile) is an active-site residue. Residues N309 and N317 are each glycosylated (N-linked (GlcNAc...) asparagine).

It belongs to the glycosyl hydrolase 17 family.

The protein localises to the secreted. It is found in the cell wall. The catalysed reaction is Successive hydrolysis of beta-D-glucose units from the non-reducing ends of (1-&gt;3)-beta-D-glucans, releasing alpha-glucose.. Functionally, glucanases possibly play a role in cell expansion during growth, in cell-cell fusion during mating, and in spore release during sporulation. This enzyme may be involved in beta-glucan degradation and also function biosynthetically as a transglycosylase. This Schizosaccharomyces pombe (strain 972 / ATCC 24843) (Fission yeast) protein is Glucan 1,3-beta-glucosidase (bgl2).